The following is a 195-amino-acid chain: Probable thymidylate kinase (195 aa).

Position 7–14 (7–14 (GIDGVGKT)) interacts with ATP.

The protein belongs to the thymidylate kinase family.

The enzyme catalyses dTMP + ATP = dTDP + ADP. The chain is Probable thymidylate kinase from Methanosphaera stadtmanae (strain ATCC 43021 / DSM 3091 / JCM 11832 / MCB-3).